A 182-amino-acid chain; its full sequence is CD-NTase-associated protein 15 (182 aa).

2 helical membrane-spanning segments follow: residues 11-31 (ITGW…CTVW) and 33-53 (IGWI…TIGY).

The protein belongs to the CBASS Cap15 membrane effector family. The beta barrel domain oligomerizes; in the presence of cyclic nucleotides (probably 3',2'-cGAMP) higher-level oligomers occur.

It localises to the cell membrane. In terms of biological role, effector protein of a CBASS antivirus system. CBASS (cyclic oligonucleotide-based antiphage signaling system) provides immunity against bacteriophage. The CD-NTase protein (CdnE) synthesizes cyclic nucleotides in response to infection; these serve as specific second messenger signals. The signals activate a diverse range of effectors, leading to bacterial cell death and thus abortive phage infection. This system triggers membrane disruption without lysis. A type I-B CBASS system. Binds cyclic nucleotide second messenger 3',2'-cGAMP, probably oligomerizing, and induces cell membrane shrinkage and rupture, leading to cell death. Functionally, protects S.aureus against phage infection. When the CBASS operon (cdnE-cap15) is introduced in S.aureus strain RN4220 there is strong protection against lytic DNA phages 80alpha-vir and phi-NM1-gamma-6 but little to no protection against phages phi-NM4-gamma-4 or phi-12-gamma-3. This is CD-NTase-associated protein 15 from Staphylococcus schleiferi.